Here is a 134-residue protein sequence, read N- to C-terminus: Interleukin-5 (134 aa).

A signal peptide spans 1 to 21 (MRMLLNLSLLALGAAYVSAFA). Residues Asn-76 and Asn-90 are each glycosylated (N-linked (GlcNAc...) asparagine).

The protein belongs to the IL-5 family. In terms of assembly, homodimer; disulfide-linked. Interacts with IL5RA. Interacts with CSF2RB.

The protein resides in the secreted. Its function is as follows. Homodimeric cytokine expressed predominantly by T-lymphocytes and NK cells that plays an important role in the survival, differentiation, and chemotaxis of eosinophils. Also acts on activated and resting B-cells to induce immunoglobulin production, growth, and differentiation. Mechanistically, exerts its biological effects through a receptor composed of IL5RA subunit and the cytokine receptor common subunit beta/CSF2RB. Binding to the receptor leads to activation of various kinases including LYN, SYK and JAK2 and thereby propagates signals through the RAS-MAPK and JAK-STAT5 pathways respectively. This Canis lupus familiaris (Dog) protein is Interleukin-5 (IL5).